A 520-amino-acid polypeptide reads, in one-letter code: MNTTISNQTPHIRIFDTTLRDGEQSPGCSMTPQQKLVMARALDALGVDIIETGFPASSHSDREAVAMMGRELRRPTLAVLSRCLQADIETSARALETVANPRLHVFLSTSPLHREHKLRMSREQVLESVHRHVTLARGYIDDVEFSAEDATRTEEDFLAEVTRVAVAAGATTINLPDTVGFTTPEEIRGMFSRLIASVEGADKVIFSAHCHNDLGLAVANSLAAIEGGARQVECTINGIGERAGNCALEEITMALKVRGAFYNIDSAINTPRIVSTSQLLQRLVGMPVQRNKAVVGGNAFAHESGIHQHGMLRHRGTYEIMRPEDVGWESSQMVLGRHSGRAAVERRLRALGYLLEEEEVKLMFEQFKALCEKQRLVTDADLQALMQDATVQEGYRLASMTISDVGSRANALVELSDPEGNRVAETAQGNGPVDALFGALASATGVKLELDSYQVHSVGIGADARGEASLSVRHDGVEYEGTGTSKDIIEASALAWLDVANRLLRQRERGVIAGKTAAVA.

The Pyruvate carboxyltransferase domain occupies 12–274 (IRIFDTTLRD…DSAINTPRIV (263 aa)). D21, H209, H211, and N245 together coordinate Mn(2+). The regulatory domain stretch occupies residues 396-520 (RLASMTISDV…VIAGKTAAVA (125 aa)).

It belongs to the alpha-IPM synthase/homocitrate synthase family. LeuA type 1 subfamily. Homodimer. The cofactor is Mn(2+).

The protein localises to the cytoplasm. It carries out the reaction 3-methyl-2-oxobutanoate + acetyl-CoA + H2O = (2S)-2-isopropylmalate + CoA + H(+). Its pathway is amino-acid biosynthesis; L-leucine biosynthesis; L-leucine from 3-methyl-2-oxobutanoate: step 1/4. Functionally, catalyzes the condensation of the acetyl group of acetyl-CoA with 3-methyl-2-oxobutanoate (2-ketoisovalerate) to form 3-carboxy-3-hydroxy-4-methylpentanoate (2-isopropylmalate). This Xanthomonas oryzae pv. oryzae (strain KACC10331 / KXO85) protein is 2-isopropylmalate synthase.